The primary structure comprises 390 residues: cAMP-dependent protein kinase regulatory subunit (390 aa).

Residues 1–17 (MSASGFTSPFGANSNPF) show a composition bias toward polar residues. The interval 1–81 (MSASGFTSPF…RPQNPDGYPA (81 aa)) is disordered. The dimerization and phosphorylation stretch occupies residues 1–129 (MSASGFTSPF…RLKKAIQGNF (129 aa)). Ser-90 is modified (phosphoserine). 3',5'-cyclic AMP contacts are provided by residues 130–261 (LFSH…EEVP), Glu-208, Arg-217, 262–383 (ILST…GVEE), Glu-329, and Arg-338.

Belongs to the cAMP-dependent kinase regulatory chain family. Tetramer, composed of 2 regulatory (R) and 2 catalytic (C) subunits. In the presence of cAMP it dissociates into 2 active monomeric C subunits and an R dimer.

This Pyricularia oryzae (strain 70-15 / ATCC MYA-4617 / FGSC 8958) (Rice blast fungus) protein is cAMP-dependent protein kinase regulatory subunit (SUM1).